We begin with the raw amino-acid sequence, 439 residues long: Xaa-Pro dipeptidase (439 aa).

Mn(2+) is bound by residues D244, D255, H335, E380, and E419.

This sequence belongs to the peptidase M24B family. Bacterial-type prolidase subfamily. Mn(2+) serves as cofactor.

The catalysed reaction is Xaa-L-Pro dipeptide + H2O = an L-alpha-amino acid + L-proline. Its function is as follows. Splits dipeptides with a prolyl residue in the C-terminal position. The sequence is that of Xaa-Pro dipeptidase from Shewanella woodyi (strain ATCC 51908 / MS32).